The sequence spans 336 residues: F-box protein PP2-B1 (336 aa).

The segment at 1–22 (MEQIHGGDSNSGGGGGGSSRND) is disordered. Residues 9–18 (SNSGGGGGGS) show a composition bias toward gly residues. The 47-residue stretch at 29-75 (ASRFDALPEDCISKVISHTSPRDACVVASVSKSVKSAAQSDLVWEMF) folds into the F-box domain.

Part of a SCF (ASK-cullin-F-box) protein ligase complex. Interacts with SKP1A/ASK1 and SPK1B/ASK2.

The protein localises to the nucleus. The protein operates within protein modification; protein ubiquitination. Its function is as follows. Component of SCF(ASK-cullin-F-box) E3 ubiquitin ligase complexes, which may mediate the ubiquitination and subsequent proteasomal degradation of target proteins. This is F-box protein PP2-B1 (PP2B1) from Arabidopsis thaliana (Mouse-ear cress).